A 334-amino-acid chain; its full sequence is Leukocyte cell-derived chemotaxin 1 (334 aa).

A helical membrane pass occupies residues 46-66 (VVLISGAVLLLFGAIGAFYFW). The 97-residue stretch at 105 to 201 (GSGAEEAIEV…LCGDLPIFWL (97 aa)) folds into the BRICHOS domain. Residues cysteine 132 and cysteine 193 are joined by a disulfide bond. Residues 211–214 (RERR) constitute a propeptide that is removed on maturation. A disordered region spans residues 212 to 270 (ERREVVRNSAPSTTRRPHSEPRGNAGPGRLSNGTRPNVQDDAEPFNPDNPYHQQEGESM). Asparagine 243 carries an N-linked (GlcNAc...) asparagine glycan. 4 disulfides stabilise this stretch: cysteine 282-cysteine 286, cysteine 283-cysteine 323, cysteine 293-cysteine 317, and cysteine 297-cysteine 313.

It belongs to the chondromodulin-1 family. After cleavage, the post-translationally modified ChM-I is secreted as a glycoprotein. As to expression, detected in the four cardiac valves, valvular interstitial cells and extracellular matrix (at protein level).

The protein localises to the secreted. The protein resides in the extracellular space. Its subcellular location is the extracellular matrix. It is found in the endomembrane system. In terms of biological role, bifunctional growth regulator that stimulates the growth of cultured chondrocytes in the presence of basic fibroblast growth factor (FGF) but inhibits the growth of cultured vascular endothelial cells. May contribute to the rapid growth of cartilage and vascular invasion prior to the replacement of cartilage by bone during endochondral bone development. Inhibits in vitro tube formation and mobilization of endothelial cells. Plays a role as antiangiogenic factor in cardiac valves to suppress neovascularization. This is Leukocyte cell-derived chemotaxin 1 from Mus musculus (Mouse).